The chain runs to 391 residues: Carbamoyl phosphate synthase small chain (391 aa).

Residues 1-187 (MAGVKERAVL…PLPYAWPTLK (187 aa)) form a CPSase region. Serine 50, glycine 239, and glycine 241 together coordinate L-glutamine. Positions 191-376 (RIVVMDFGIK…LEEVEAFHGA (186 aa)) constitute a Glutamine amidotransferase type-1 domain. Cysteine 266 functions as the Nucleophile in the catalytic mechanism. L-glutamine contacts are provided by leucine 267, glutamine 270, asparagine 308, glycine 310, and tyrosine 311. Catalysis depends on residues histidine 349 and glutamate 351.

This sequence belongs to the CarA family. As to quaternary structure, composed of two chains; the small (or glutamine) chain promotes the hydrolysis of glutamine to ammonia, which is used by the large (or ammonia) chain to synthesize carbamoyl phosphate. Tetramer of heterodimers (alpha,beta)4.

The enzyme catalyses hydrogencarbonate + L-glutamine + 2 ATP + H2O = carbamoyl phosphate + L-glutamate + 2 ADP + phosphate + 2 H(+). It catalyses the reaction L-glutamine + H2O = L-glutamate + NH4(+). Its pathway is amino-acid biosynthesis; L-arginine biosynthesis; carbamoyl phosphate from bicarbonate: step 1/1. It participates in pyrimidine metabolism; UMP biosynthesis via de novo pathway; (S)-dihydroorotate from bicarbonate: step 1/3. Functionally, small subunit of the glutamine-dependent carbamoyl phosphate synthetase (CPSase). CPSase catalyzes the formation of carbamoyl phosphate from the ammonia moiety of glutamine, carbonate, and phosphate donated by ATP, constituting the first step of 2 biosynthetic pathways, one leading to arginine and/or urea and the other to pyrimidine nucleotides. The small subunit (glutamine amidotransferase) binds and cleaves glutamine to supply the large subunit with the substrate ammonia. The protein is Carbamoyl phosphate synthase small chain of Thermus thermophilus (strain ATCC BAA-163 / DSM 7039 / HB27).